A 118-amino-acid chain; its full sequence is Large ribosomal subunit protein uL22 (118 aa).

This sequence belongs to the universal ribosomal protein uL22 family. Part of the 50S ribosomal subunit.

This protein binds specifically to 23S rRNA; its binding is stimulated by other ribosomal proteins, e.g. L4, L17, and L20. It is important during the early stages of 50S assembly. It makes multiple contacts with different domains of the 23S rRNA in the assembled 50S subunit and ribosome. Functionally, the globular domain of the protein is located near the polypeptide exit tunnel on the outside of the subunit, while an extended beta-hairpin is found that lines the wall of the exit tunnel in the center of the 70S ribosome. This chain is Large ribosomal subunit protein uL22, found in Pediococcus pentosaceus (strain ATCC 25745 / CCUG 21536 / LMG 10740 / 183-1w).